The primary structure comprises 302 residues: UDP-N-acetylenolpyruvoylglucosamine reductase (302 aa).

The FAD-binding PCMH-type domain occupies 29–192 (KVGGPVDLLA…VAVTLQLSED (164 aa)). Residue Arg172 is part of the active site. Ser221 serves as the catalytic Proton donor. Glu291 is a catalytic residue.

This sequence belongs to the MurB family. The cofactor is FAD.

It localises to the cytoplasm. It catalyses the reaction UDP-N-acetyl-alpha-D-muramate + NADP(+) = UDP-N-acetyl-3-O-(1-carboxyvinyl)-alpha-D-glucosamine + NADPH + H(+). The protein operates within cell wall biogenesis; peptidoglycan biosynthesis. In terms of biological role, cell wall formation. This is UDP-N-acetylenolpyruvoylglucosamine reductase from Trichlorobacter lovleyi (strain ATCC BAA-1151 / DSM 17278 / SZ) (Geobacter lovleyi).